Reading from the N-terminus, the 308-residue chain is tRNA dimethylallyltransferase (308 aa).

Residue Gly-14–Thr-21 coordinates ATP. Position 16-21 (Thr-16–Thr-21) interacts with substrate. Interaction with substrate tRNA stretches follow at residues Asp-39–Leu-42, Gln-163–Arg-167, and Arg-244–Arg-249.

Belongs to the IPP transferase family. In terms of assembly, monomer. Mg(2+) serves as cofactor.

It catalyses the reaction adenosine(37) in tRNA + dimethylallyl diphosphate = N(6)-dimethylallyladenosine(37) in tRNA + diphosphate. In terms of biological role, catalyzes the transfer of a dimethylallyl group onto the adenine at position 37 in tRNAs that read codons beginning with uridine, leading to the formation of N6-(dimethylallyl)adenosine (i(6)A). This chain is tRNA dimethylallyltransferase, found in Shewanella oneidensis (strain ATCC 700550 / JCM 31522 / CIP 106686 / LMG 19005 / NCIMB 14063 / MR-1).